The sequence spans 228 residues: Aquaporin Z 2 (228 aa).

The next 2 helical transmembrane spans lie at 9-29 and 34-54; these read FFGT…AAAF and IGFT…AYAV. The NPA 1 signature appears at 63 to 65; sequence NPA. 3 consecutive transmembrane segments (helical) span residues 82–102, 129–149, and 158–178; these read VPYV…LYVI, LVSA…VILG, and GFAP…SIPV. The short motif at 184-186 is the NPA 2 element; that stretch reads NPA. Residues 204–224 form a helical membrane-spanning segment; sequence WLFWLAPIVGGAAGAVIWKLF.

This sequence belongs to the MIP/aquaporin (TC 1.A.8) family. As to quaternary structure, homotetramer.

It is found in the cell inner membrane. The enzyme catalyses H2O(in) = H2O(out). Functionally, channel that permits osmotically driven movement of water in both directions. It is involved in the osmoregulation and in the maintenance of cell turgor during volume expansion in rapidly growing cells. It mediates rapid entry or exit of water in response to abrupt changes in osmolarity. The sequence is that of Aquaporin Z 2 from Agrobacterium fabrum (strain C58 / ATCC 33970) (Agrobacterium tumefaciens (strain C58)).